A 301-amino-acid chain; its full sequence is Probable tRNA pseudouridine synthase B (301 aa).

Residue aspartate 54 is the Nucleophile of the active site. The PUA domain maps to 227 to 301 (LPRLTIADSA…VVVALERVLV (75 aa)).

This sequence belongs to the pseudouridine synthase TruB family. Type 2 subfamily.

It carries out the reaction uridine(55) in tRNA = pseudouridine(55) in tRNA. Its function is as follows. Could be responsible for synthesis of pseudouridine from uracil-55 in the psi GC loop of transfer RNAs. The polypeptide is Probable tRNA pseudouridine synthase B (Halobacterium salinarum (strain ATCC 29341 / DSM 671 / R1)).